The primary structure comprises 231 residues: Octanoyl-[acyl-carrier-protein]:protein N-octanoyltransferase LIPT2, mitochondrial (231 aa).

The 184-residue stretch at 41–224 (GTKAGVLLVC…AFKETFKCTL (184 aa)) folds into the BPL/LPL catalytic domain. Residue lysine 43 is modified to N6-succinyllysine. Residues 85-92 (RGGLATFH), 154-156 (AIG), and 167-169 (GLA) each bind substrate. Cysteine 185 acts as the Acyl-thioester intermediate in catalysis.

It belongs to the LipB family.

Its subcellular location is the mitochondrion. The catalysed reaction is octanoyl-[ACP] + L-lysyl-[protein] = N(6)-octanoyl-L-lysyl-[protein] + holo-[ACP] + H(+). The protein operates within protein modification; protein lipoylation via endogenous pathway; protein N(6)-(lipoyl)lysine from octanoyl-[acyl-carrier-protein]: step 1/2. In terms of biological role, catalyzes the transfer of endogenously produced octanoic acid from octanoyl-acyl-carrier-protein onto the lipoyl domains of lipoate-dependent enzymes such as the protein H of the glycine cleavage system (GCSH). Lipoyl-ACP can also act as a substrate although octanoyl-ACP is likely to be the physiological substrate. The protein is Octanoyl-[acyl-carrier-protein]:protein N-octanoyltransferase LIPT2, mitochondrial of Mus musculus (Mouse).